Consider the following 485-residue polypeptide: tRNA sulfurtransferase (485 aa).

The region spanning 61 to 165 (EELIALLQRI…DDKMMLVKTR (105 aa)) is the THUMP domain. ATP-binding positions include 183–184 (LI), Lys265, Gly287, and Gln296. Cys344 and Cys456 form a disulfide bridge. The 80-residue stretch at 404–483 (LGENEVILDI…FSNVRVFAKN (80 aa)) folds into the Rhodanese domain. The Cysteine persulfide intermediate role is filled by Cys456.

Belongs to the ThiI family.

The protein localises to the cytoplasm. The catalysed reaction is [ThiI sulfur-carrier protein]-S-sulfanyl-L-cysteine + a uridine in tRNA + 2 reduced [2Fe-2S]-[ferredoxin] + ATP + H(+) = [ThiI sulfur-carrier protein]-L-cysteine + a 4-thiouridine in tRNA + 2 oxidized [2Fe-2S]-[ferredoxin] + AMP + diphosphate. The enzyme catalyses [ThiS sulfur-carrier protein]-C-terminal Gly-Gly-AMP + S-sulfanyl-L-cysteinyl-[cysteine desulfurase] + AH2 = [ThiS sulfur-carrier protein]-C-terminal-Gly-aminoethanethioate + L-cysteinyl-[cysteine desulfurase] + A + AMP + 2 H(+). Its pathway is cofactor biosynthesis; thiamine diphosphate biosynthesis. In terms of biological role, catalyzes the ATP-dependent transfer of a sulfur to tRNA to produce 4-thiouridine in position 8 of tRNAs, which functions as a near-UV photosensor. Also catalyzes the transfer of sulfur to the sulfur carrier protein ThiS, forming ThiS-thiocarboxylate. This is a step in the synthesis of thiazole, in the thiamine biosynthesis pathway. The sulfur is donated as persulfide by IscS. The protein is tRNA sulfurtransferase of Haemophilus influenzae (strain 86-028NP).